A 91-amino-acid chain; its full sequence is Acylphosphatase (91 aa).

The region spanning 6–91 (CMRCYISGRV…WEDYISFDVL (86 aa)) is the Acylphosphatase-like domain. Active-site residues include R21 and N39.

Belongs to the acylphosphatase family.

It catalyses the reaction an acyl phosphate + H2O = a carboxylate + phosphate + H(+). The chain is Acylphosphatase (acyP) from Legionella pneumophila (strain Corby).